The chain runs to 163 residues: ADP-ribosylation factor-like protein 2-binding protein (163 aa).

It belongs to the ARL2BP family. In terms of assembly, interacts with GTP bound ARL2 and ARL3; the complex ARL2-ARL2BP as well as ARL2BP alone, binds to SLC25A4/ANT1. Interaction with ARL2 may be required for cilia basal body localization. Interacts with STAT3; interaction is enhanced with ARL2. Found in a complex with ARL2BP, ARL2 and SLC25A6. Found in a complex with ARL2, ARL2BP and SLC25A4. Interacts with STAT2, STAT3 and STAT4. Ubiquitous with higher expression in brain, especially in hippocampus and cortex. Also expressed in lung, cerebellum, liver, kidney, spleen and heart (at protein level).

It localises to the cytoplasm. The protein localises to the mitochondrion intermembrane space. Its subcellular location is the cytoskeleton. The protein resides in the microtubule organizing center. It is found in the centrosome. It localises to the nucleus. The protein localises to the spindle. Its subcellular location is the cilium basal body. Together with ARL2, plays a role in the nuclear translocation, retention and transcriptional activity of STAT3. May play a role as an effector of ARL2. In Rattus norvegicus (Rat), this protein is ADP-ribosylation factor-like protein 2-binding protein (Arl2bp).